Reading from the N-terminus, the 254-residue chain is DNA repair protein RecO (254 aa).

It belongs to the RecO family.

Involved in DNA repair and RecF pathway recombination. This is DNA repair protein RecO from Agrobacterium fabrum (strain C58 / ATCC 33970) (Agrobacterium tumefaciens (strain C58)).